A 216-amino-acid chain; its full sequence is MGKIGIFGGTFDPPHYGHLIMANEVLDALQLSQIWFLPNRIPPHKQNEQVTRSEDRLRMLELAVAGHPRFHIETIELEREGPSYTYDTIRQLTAMHPDDEFYFIIGADMVEYLPNWHRIDELIELVTFVGVKRPGFSMETPYPVIEVEVPQFAISSSLIRERVQNGQTIRYLVPEGVRLYIEEKGLYGARTSVADCERAADGTSLRAYAWRCRDGC.

It belongs to the NadD family.

The enzyme catalyses nicotinate beta-D-ribonucleotide + ATP + H(+) = deamido-NAD(+) + diphosphate. Its pathway is cofactor biosynthesis; NAD(+) biosynthesis; deamido-NAD(+) from nicotinate D-ribonucleotide: step 1/1. Catalyzes the reversible adenylation of nicotinate mononucleotide (NaMN) to nicotinic acid adenine dinucleotide (NaAD). The sequence is that of Probable nicotinate-nucleotide adenylyltransferase from Geobacillus thermodenitrificans (strain NG80-2).